The following is a 113-amino-acid chain: uncharacterized protein (113 aa).

2 disordered regions span residues 1–22 (MGEHAIKRHMRQRKPTKHPLAQ) and 90–113 (DGRHTTESSFEHSSPSRSPQSDDL). The span at 90–99 (DGRHTTESSF) shows a compositional bias: basic and acidic residues. Positions 100–113 (EHSSPSRSPQSDDL) are enriched in low complexity.

This is an uncharacterized protein from Mycobacterium tuberculosis (strain CDC 1551 / Oshkosh).